The chain runs to 529 residues: Laccase-1 (529 aa).

A signal peptide spans 1–23 (MFPGARILATLTLALHLLHGTHA). Plastocyanin-like domains are found at residues 25–159 (IGPT…FIVY), 170–312 (DVDN…ILRY), and 380–499 (TAPV…FAED). N-linked (GlcNAc...) asparagine glycosylation is present at N57. H96, H98, H141, and H143 together coordinate Cu cation. Cystine bridges form between C117–C514 and C149–C236. N-linked (GlcNAc...) asparagine glycosylation is found at N239 and N282. Residues H425, H428, H430, H481, C482, H483, and H487 each coordinate Cu cation.

The protein belongs to the multicopper oxidase family. Cu cation is required as a cofactor.

The protein localises to the secreted. The catalysed reaction is 4 hydroquinone + O2 = 4 benzosemiquinone + 2 H2O. Lignin degradation and detoxification of lignin-derived products. This Pleurotus ostreatus (Oyster mushroom) protein is Laccase-1 (POX1).